Consider the following 230-residue polypeptide: Tol-Pal system protein TolQ (230 aa).

3 helical membrane-spanning segments follow: residues 16–36, 139–159, and 171–191; these read LVKLIMLILIGFSIASWAIII, YIGLFGTVWGIMHAFIALGAV, and IAEALIATAIGLFAAIPAVMA.

This sequence belongs to the ExbB/TolQ family. In terms of assembly, the Tol-Pal system is composed of five core proteins: the inner membrane proteins TolA, TolQ and TolR, the periplasmic protein TolB and the outer membrane protein Pal. They form a network linking the inner and outer membranes and the peptidoglycan layer.

Its subcellular location is the cell inner membrane. Part of the Tol-Pal system, which plays a role in outer membrane invagination during cell division and is important for maintaining outer membrane integrity. Required, with TolR, for the proton motive force-dependent activation of TolA and for TolA-Pal interaction. The protein is Tol-Pal system protein TolQ of Escherichia coli O157:H7.